The sequence spans 410 residues: MVTVNENYLLLKSSYIFSEINRRVEEFQRKNPDADIIRMGIGDVTRPLPEAVVEAFHRAVDEMAEEETFRGYGPEQGYPFLREAIAENDYASRGVDITADEIFISDGAKCDTGNIQEIFGLDNVVAVTDPVYPVYVESNVMAGRAGPADDDGRYSGLVYLPCTEENSFIPSLPEERVDLIYLCYPNNPTGTTLTEKQLAEWVDYARDSGSLILFDAAYEAYIQEDGIPHSIYEVEGAREVAIEFRSFSKNAGFTGTRCAFTVVPEELEVPDSSGRMHSVRELWNRRQTTKFNGVSYPVQRAAEAVYTPEGQREIRESIDYYMENARIIRESLERAGLRYYGGVNAPYIWIRTPEGMDSWQFFDTLLNDAEVVGTPGSGFGPSGEGYFRLTAFNSFRNTVKAMERISELSF.

Residues Tyr15 and Gly42 each contribute to the substrate site. Residues Tyr72, 108-109 (AK), Tyr132, Asn187, Tyr218, and 246-248 (SFS) each bind pyridoxal 5'-phosphate. Substrate-binding residues include Lys109, Tyr132, and Asn187. Lys249 is modified (N6-(pyridoxal phosphate)lysine). The pyridoxal 5'-phosphate site is built by Arg257 and Asn292. Positions 292 and 388 each coordinate substrate.

It belongs to the class-I pyridoxal-phosphate-dependent aminotransferase family. LL-diaminopimelate aminotransferase subfamily. Homodimer. The cofactor is pyridoxal 5'-phosphate.

The enzyme catalyses (2S,6S)-2,6-diaminopimelate + 2-oxoglutarate = (S)-2,3,4,5-tetrahydrodipicolinate + L-glutamate + H2O + H(+). Its pathway is amino-acid biosynthesis; L-lysine biosynthesis via DAP pathway; LL-2,6-diaminopimelate from (S)-tetrahydrodipicolinate (aminotransferase route): step 1/1. In terms of biological role, involved in the synthesis of meso-diaminopimelate (m-DAP or DL-DAP), required for both lysine and peptidoglycan biosynthesis. Catalyzes the direct conversion of tetrahydrodipicolinate to LL-diaminopimelate. Is also able to catalyze the reverse reaction in vitro, i.e. the transamination of LL-diaminopimelate with 2-oxoglutarate to produce 2-oxo-6-aminopimelate (in equilibrium with tetrahydrodipicolinate) and glutamate. Has maximal aminotransferase activity using 2-oxoglutarate as an amino group acceptor, and cannot use oxaloacetate instead of 2-oxoglutarate, although 2-oxoadipate can substitute with 21% relative activity. Cannot use m-DAP, lysine or ornithine as the amino-group donor, when using 2-oxoglutarate as the amino-group acceptor. The sequence is that of LL-diaminopimelate aminotransferase from Methanothermobacter thermautotrophicus (strain ATCC 29096 / DSM 1053 / JCM 10044 / NBRC 100330 / Delta H) (Methanobacterium thermoautotrophicum).